The following is a 354-amino-acid chain: Phosphatidylserine decarboxylase proenzyme (354 aa).

A helical membrane pass occupies residues 18 to 36 (YLITGVTILSFILMFQYKY). Active-site charge relay system; for autoendoproteolytic cleavage activity residues include aspartate 139, histidine 198, and serine 308. Serine 308 (schiff-base intermediate with substrate; via pyruvic acid; for decarboxylase activity) is an active-site residue. Serine 308 is subject to Pyruvic acid (Ser); by autocatalysis.

It belongs to the phosphatidylserine decarboxylase family. PSD-B subfamily. Eukaryotic type I sub-subfamily. As to quaternary structure, heterodimer of a large membrane-associated beta subunit and a small pyruvoyl-containing alpha subunit. Requires pyruvate as cofactor. Post-translationally, is synthesized initially as an inactive proenzyme. Formation of the active enzyme involves a self-maturation process in which the active site pyruvoyl group is generated from an internal serine residue via an autocatalytic post-translational modification. Two non-identical subunits are generated from the proenzyme in this reaction, and the pyruvate is formed at the N-terminus of the alpha chain, which is derived from the carboxyl end of the proenzyme. The autoendoproteolytic cleavage occurs by a canonical serine protease mechanism, in which the side chain hydroxyl group of the serine supplies its oxygen atom to form the C-terminus of the beta chain, while the remainder of the serine residue undergoes an oxidative deamination to produce ammonia and the pyruvoyl prosthetic group on the alpha chain. During this reaction, the Ser that is part of the protease active site of the proenzyme becomes the pyruvoyl prosthetic group, which constitutes an essential element of the active site of the mature decarboxylase.

The protein resides in the membrane. It localises to the endoplasmic reticulum membrane. It carries out the reaction a 1,2-diacyl-sn-glycero-3-phospho-L-serine + H(+) = a 1,2-diacyl-sn-glycero-3-phosphoethanolamine + CO2. It functions in the pathway phospholipid metabolism; phosphatidylethanolamine biosynthesis; phosphatidylethanolamine from CDP-diacylglycerol: step 2/2. With respect to regulation, protease activity is inhibited by PMSF. Functionally, catalyzes the formation of phosphatidylethanolamine (PtdEtn) from phosphatidylserine (PtdSer). Plays a central role in phospholipid metabolism and in the interorganelle trafficking of phosphatidylserine. The polypeptide is Phosphatidylserine decarboxylase proenzyme (Plasmodium knowlesi (strain H)).